The primary structure comprises 344 residues: Dihydroorotase (344 aa).

Zn(2+)-binding residues include His13 and His15. Residues 15 to 17 (HVR) and Asn41 contribute to the substrate site. Zn(2+) is bound by residues Lys99, His136, and His174. Lys99 is modified (N6-carboxylysine). His136 contributes to the substrate binding site. Leu219 serves as a coordination point for substrate. Asp247 contributes to the Zn(2+) binding site. The active site involves Asp247. Positions 251 and 263 each coordinate substrate.

Belongs to the metallo-dependent hydrolases superfamily. DHOase family. Class II DHOase subfamily. In terms of assembly, homodimer. Zn(2+) is required as a cofactor.

It carries out the reaction (S)-dihydroorotate + H2O = N-carbamoyl-L-aspartate + H(+). Its pathway is pyrimidine metabolism; UMP biosynthesis via de novo pathway; (S)-dihydroorotate from bicarbonate: step 3/3. Functionally, catalyzes the reversible cyclization of carbamoyl aspartate to dihydroorotate. The polypeptide is Dihydroorotase (Azoarcus sp. (strain BH72)).